The chain runs to 249 residues: Putative protein SNX29P2 (249 aa).

Disordered stretches follow at residues 109–171 (QVTN…SNSW) and 188–249 (DVKS…PGFK). Positions 156–170 (SPFGPNSNGSQSSNS) are enriched in low complexity. Positions 193-204 (DDEDVDENEDDV) are enriched in acidic residues. Polar residues predominate over residues 226–242 (HSVTQAGVQWHDLSSLQ).

This sequence belongs to the sorting nexin family.

In Homo sapiens (Human), this protein is Putative protein SNX29P2 (SNX29P2).